Here is a 228-residue protein sequence, read N- to C-terminus: NAD(P)H-hydrate epimerase (228 aa).

One can recognise a YjeF N-terminal domain in the interval Ala-9–Glu-214. Asn-60 to Asp-64 is a binding site for (6S)-NADPHX. Positions 61 and 125 each coordinate K(+). Residues Gly-129 to Glu-135 and Asp-158 contribute to the (6S)-NADPHX site. Residue Ser-161 participates in K(+) binding.

It belongs to the NnrE/AIBP family. K(+) is required as a cofactor.

It carries out the reaction (6R)-NADHX = (6S)-NADHX. The enzyme catalyses (6R)-NADPHX = (6S)-NADPHX. Its function is as follows. Catalyzes the epimerization of the S- and R-forms of NAD(P)HX, a damaged form of NAD(P)H that is a result of enzymatic or heat-dependent hydration. This is a prerequisite for the S-specific NAD(P)H-hydrate dehydratase to allow the repair of both epimers of NAD(P)HX. This chain is NAD(P)H-hydrate epimerase, found in Nematostella vectensis (Starlet sea anemone).